Here is a 153-residue protein sequence, read N- to C-terminus: 6,7-dimethyl-8-ribityllumazine synthase (153 aa).

Residues F22, 56–58 (AFE), and 80–82 (TVI) each bind 5-amino-6-(D-ribitylamino)uracil. 85-86 (ST) is a binding site for (2S)-2-hydroxy-3-oxobutyl phosphate. H88 functions as the Proton donor in the catalytic mechanism. Position 113 (F113) interacts with 5-amino-6-(D-ribitylamino)uracil. R127 contributes to the (2S)-2-hydroxy-3-oxobutyl phosphate binding site.

Belongs to the DMRL synthase family. Forms an icosahedral capsid composed of 60 subunits, arranged as a dodecamer of pentamers.

The enzyme catalyses (2S)-2-hydroxy-3-oxobutyl phosphate + 5-amino-6-(D-ribitylamino)uracil = 6,7-dimethyl-8-(1-D-ribityl)lumazine + phosphate + 2 H2O + H(+). It participates in cofactor biosynthesis; riboflavin biosynthesis; riboflavin from 2-hydroxy-3-oxobutyl phosphate and 5-amino-6-(D-ribitylamino)uracil: step 1/2. Functionally, catalyzes the formation of 6,7-dimethyl-8-ribityllumazine by condensation of 5-amino-6-(D-ribitylamino)uracil with 3,4-dihydroxy-2-butanone 4-phosphate. This is the penultimate step in the biosynthesis of riboflavin. The chain is 6,7-dimethyl-8-ribityllumazine synthase from Glaesserella parasuis serovar 5 (strain SH0165) (Haemophilus parasuis).